A 188-amino-acid chain; its full sequence is UPF0301 protein XF_2228 (188 aa).

It belongs to the UPF0301 (AlgH) family.

The sequence is that of UPF0301 protein XF_2228 from Xylella fastidiosa (strain 9a5c).